The chain runs to 443 residues: Cyclic AMP receptor 4 (443 aa).

The Extracellular segment spans residues 1 to 11 (MKVLQEINLTY). Asn-8 carries an N-linked (GlcNAc...) asparagine glycan. Residues 12 to 32 (SILVIADFSSIFGCLLVLIAF) traverse the membrane as a helical segment. Over 33–44 (KKLKLLRNHITR) the chain is Cytoplasmic. A helical transmembrane segment spans residues 45 to 65 (VIACFCVSSLLKDIISTGLTL). Residues 66–89 (SLGPQNEAGSTSFQCYLYAITITY) lie on the Extracellular side of the membrane. A helical membrane pass occupies residues 90 to 110 (GSLACWLWTLCLAFSIYNLIV). Residues 111–119 (KREPEPEKY) are Cytoplasmic-facing. Residues 120 to 140 (EKFYHGVCWTIPLICVIVMLA) traverse the membrane as a helical segment. The Extracellular segment spans residues 141–161 (KKTIEPVGNWCWISEKYVGYR). A helical transmembrane segment spans residues 162–182 (FGLFYGPFFAIWIISAVLVGL). The Cytoplasmic segment spans residues 183–208 (TSRYTYSVIRNSVSDNKDKHMTYQFK). A helical transmembrane segment spans residues 209–229 (LINYIIVFLLCWVFAIVNRIL). The Extracellular portion of the chain corresponds to 230 to 263 (NGLGYYPTLPNILHTYFSVSHGFFASVTFIYNNP). Residues 264–284 (LMWRYWGSKIFLIFAKFGYFV) traverse the membrane as a helical segment. At 285-443 (ELQRRLDRNK…DEREKKDNKF (159 aa)) the chain is on the cytoplasmic side. 2 disordered regions span residues 325 to 354 (NDISNDNQQQQQQQQTPQQPQQQFQQQQSP) and 396 to 443 (SFEI…DNKF). Low complexity predominate over residues 332–352 (QQQQQQQQTPQQPQQQFQQQQ). Residues 396–410 (SFEITQPSNDLNTIE) show a composition bias toward polar residues. Low complexity predominate over residues 411–425 (NNNNYNNNNNNNNNN). A compositionally biased stretch (basic and acidic residues) spans 429 to 443 (IEKEKDEREKKDNKF).

Belongs to the G-protein coupled receptor 5 family. In terms of processing, C-terminal Ser or Thr residues may be phosphorylated.

The protein resides in the membrane. In terms of biological role, receptor for cAMP. Regulates axial patterning and cellular differentiation during late development. The activity of this receptor is mediated by G proteins. The polypeptide is Cyclic AMP receptor 4 (carD) (Dictyostelium discoideum (Social amoeba)).